A 445-amino-acid chain; its full sequence is tRNA-2-methylthio-N(6)-dimethylallyladenosine synthase (445 aa).

The 115-residue stretch at 7–121 folds into the MTTase N-terminal domain; that stretch reads KTFYIETFGC…LPEMLVQLEA (115 aa). [4Fe-4S] cluster-binding residues include C16, C52, C84, C158, C162, and C165. A Radical SAM core domain is found at 144-374; it reads RDNPHRAYLT…QEKQRAIQIR (231 aa). The TRAM domain maps to 377–443; sequence AEMIGSIQEV…PNSLVGESAA (67 aa).

This sequence belongs to the methylthiotransferase family. MiaB subfamily. As to quaternary structure, monomer. [4Fe-4S] cluster is required as a cofactor.

The protein resides in the cytoplasm. The catalysed reaction is N(6)-dimethylallyladenosine(37) in tRNA + (sulfur carrier)-SH + AH2 + 2 S-adenosyl-L-methionine = 2-methylsulfanyl-N(6)-dimethylallyladenosine(37) in tRNA + (sulfur carrier)-H + 5'-deoxyadenosine + L-methionine + A + S-adenosyl-L-homocysteine + 2 H(+). Its function is as follows. Catalyzes the methylthiolation of N6-(dimethylallyl)adenosine (i(6)A), leading to the formation of 2-methylthio-N6-(dimethylallyl)adenosine (ms(2)i(6)A) at position 37 in tRNAs that read codons beginning with uridine. This chain is tRNA-2-methylthio-N(6)-dimethylallyladenosine synthase, found in Solibacter usitatus (strain Ellin6076).